The sequence spans 286 residues: Bifunctional protein FolD (286 aa).

Residues 165–167 (GRS) and S190 contribute to the NADP(+) site.

This sequence belongs to the tetrahydrofolate dehydrogenase/cyclohydrolase family. Homodimer.

It catalyses the reaction (6R)-5,10-methylene-5,6,7,8-tetrahydrofolate + NADP(+) = (6R)-5,10-methenyltetrahydrofolate + NADPH. The enzyme catalyses (6R)-5,10-methenyltetrahydrofolate + H2O = (6R)-10-formyltetrahydrofolate + H(+). The protein operates within one-carbon metabolism; tetrahydrofolate interconversion. Its function is as follows. Catalyzes the oxidation of 5,10-methylenetetrahydrofolate to 5,10-methenyltetrahydrofolate and then the hydrolysis of 5,10-methenyltetrahydrofolate to 10-formyltetrahydrofolate. In Paraburkholderia phytofirmans (strain DSM 17436 / LMG 22146 / PsJN) (Burkholderia phytofirmans), this protein is Bifunctional protein FolD.